The sequence spans 72 residues: Translation initiation factor IF-1 (72 aa).

Positions 1 to 72 (MAKEEAIEIE…TKGRITYRYK (72 aa)) constitute an S1-like domain.

Belongs to the IF-1 family. Component of the 30S ribosomal translation pre-initiation complex which assembles on the 30S ribosome in the order IF-2 and IF-3, IF-1 and N-formylmethionyl-tRNA(fMet); mRNA recruitment can occur at any time during PIC assembly.

It is found in the cytoplasm. In terms of biological role, one of the essential components for the initiation of protein synthesis. Stabilizes the binding of IF-2 and IF-3 on the 30S subunit to which N-formylmethionyl-tRNA(fMet) subsequently binds. Helps modulate mRNA selection, yielding the 30S pre-initiation complex (PIC). Upon addition of the 50S ribosomal subunit IF-1, IF-2 and IF-3 are released leaving the mature 70S translation initiation complex. In Chlorobium phaeobacteroides (strain DSM 266 / SMG 266 / 2430), this protein is Translation initiation factor IF-1.